A 94-amino-acid chain; its full sequence is Large ribosomal subunit protein bL27 (94 aa).

The propeptide occupies 1 to 9; sequence MNLANLQLF. Residues 11 to 33 are disordered; sequence HKKGGGSTSNGRDSQAKRLGAKA.

Belongs to the bacterial ribosomal protein bL27 family. The N-terminus is cleaved by ribosomal processing cysteine protease Prp.

This chain is Large ribosomal subunit protein bL27, found in Streptococcus agalactiae serotype V (strain ATCC BAA-611 / 2603 V/R).